The following is a 537-amino-acid chain: [Pyruvate dehydrogenase [acetyl-transferring]]-phosphatase 1, mitochondrial (537 aa).

The N-terminal 71 residues, Met1 to Tyr71, are a transit peptide targeting the mitochondrion. The PPM-type phosphatase domain maps to Ile109–Phe525. Mn(2+)-binding residues include Asp144 and Gly145. N6-acetyllysine is present on Lys202. Residues Asp418 and Asp516 each contribute to the Mn(2+) site.

It belongs to the PP2C family. Heterodimer of a catalytic (PDP1) and a regulatory (PDPR) subunit. It depends on Mn(2+) as a cofactor. Requires Mg(2+) as cofactor.

It is found in the mitochondrion. It catalyses the reaction O-phospho-L-seryl-[pyruvate dehydrogenase E1 alpha subunit] + H2O = L-seryl-[pyruvate dehydrogenase E1 alpha subunit] + phosphate. Its activity is regulated as follows. Magnesium-dependent and calcium-stimulated. PDP1 activity strongly depends on its Ca(2+)-dependent binding to the lipoyl domain of E2 subunit of component of the pyruvate dehydrogenase complex. Mitochondrial enzyme that catalyzes the dephosphorylation and concomitant reactivation of the alpha subunit of the E1 component of the pyruvate dehydrogenase complex (PDC), thereby stimulating the conversion of pyruvate into acetyl-CoA. The polypeptide is [Pyruvate dehydrogenase [acetyl-transferring]]-phosphatase 1, mitochondrial (PDP1) (Pongo abelii (Sumatran orangutan)).